The chain runs to 414 residues: Glutamyl-tRNA reductase (414 aa).

Substrate contacts are provided by residues 49-52, serine 108, 113-115, and glutamine 119; these read TCNR and EPQ. Cysteine 50 (nucleophile) is an active-site residue. Residue 188–193 participates in NADP(+) binding; sequence GAGQTG.

The protein belongs to the glutamyl-tRNA reductase family. In terms of assembly, homodimer.

The enzyme catalyses (S)-4-amino-5-oxopentanoate + tRNA(Glu) + NADP(+) = L-glutamyl-tRNA(Glu) + NADPH + H(+). It participates in porphyrin-containing compound metabolism; protoporphyrin-IX biosynthesis; 5-aminolevulinate from L-glutamyl-tRNA(Glu): step 1/2. Its function is as follows. Catalyzes the NADPH-dependent reduction of glutamyl-tRNA(Glu) to glutamate 1-semialdehyde (GSA). In Francisella philomiragia subsp. philomiragia (strain ATCC 25017 / CCUG 19701 / FSC 153 / O#319-036), this protein is Glutamyl-tRNA reductase.